The following is a 127-amino-acid chain: Small ribosomal subunit protein uS11 (127 aa).

Belongs to the universal ribosomal protein uS11 family. As to quaternary structure, part of the 30S ribosomal subunit. Interacts with proteins S7 and S18. Binds to IF-3.

In terms of biological role, located on the platform of the 30S subunit, it bridges several disparate RNA helices of the 16S rRNA. Forms part of the Shine-Dalgarno cleft in the 70S ribosome. In Chlorobium luteolum (strain DSM 273 / BCRC 81028 / 2530) (Pelodictyon luteolum), this protein is Small ribosomal subunit protein uS11.